The chain runs to 169 residues: Spore protein SP21 (169 aa).

Disordered stretches follow at residues 1 to 21 and 150 to 169; these read MADL…REWD and QPKR…HIKA. One can recognise a sHSP domain in the interval 47-159; that stretch reads QGPPAFVPAF…QPKRIQVASS (113 aa).

Belongs to the small heat shock protein (HSP20) family.

Its function is as follows. May stabilize cellular components during stress and spore formation. The chain is Spore protein SP21 (hspA) from Stigmatella aurantiaca (strain DW4/3-1).